An 850-amino-acid chain; its full sequence is AdoMet-dependent rRNA methyltransferase SPB1 (850 aa).

Residues glycine 58, tryptophan 60, aspartate 78, aspartate 94, and aspartate 119 each contribute to the S-adenosyl-L-methionine site. The Proton acceptor role is filled by lysine 159. The span at 273–282 (GETNEMTWTP) shows a compositional bias: polar residues. 4 disordered regions span residues 273 to 305 (GETN…ARDE), 388 to 414 (IDKE…NEMK), 529 to 569 (GISD…RTLN), and 620 to 646 (AKKN…KQDD). Basic and acidic residues predominate over residues 388 to 400 (IDKELSELGEREK). Residues 397–425 (EREKARKKRERRRRNEMKQREIQRMQMNM) adopt a coiled-coil conformation. The segment covering 401–411 (ARKKRERRRRN) has biased composition (basic residues). Acidic residues-rich tracts occupy residues 537 to 561 (DESD…DEDD) and 628 to 638 (SDSEDEEDDIV). Residues 746-773 (LEAKGRKKMRALRRLEQMKKKSELINED) are a coiled coil. Residues 811–850 (KNKGIAGRPRGVTGKYKMVDGTMKKEQRAIRRIKKKMGKK) form a disordered region. Over residues 840 to 850 (IRRIKKKMGKK) the composition is skewed to basic residues.

It belongs to the class I-like SAM-binding methyltransferase superfamily. RNA methyltransferase RlmE family. SPB1 subfamily. Component of the nucleolar and nucleoplasmic pre-60S ribosomal particle.

The protein resides in the nucleus. It is found in the nucleolus. The enzyme catalyses a ribonucleotide in rRNA + S-adenosyl-L-methionine = a 2'-O-methylribonucleotide in rRNA + S-adenosyl-L-homocysteine + H(+). Required for proper assembly of pre-ribosomal particles during the biogenesis of the 60S ribosomal subunit. This chain is AdoMet-dependent rRNA methyltransferase SPB1, found in Yarrowia lipolytica (strain CLIB 122 / E 150) (Yeast).